The sequence spans 216 residues: Probable nicotinate-nucleotide adenylyltransferase (216 aa).

The protein belongs to the NadD family.

It catalyses the reaction nicotinate beta-D-ribonucleotide + ATP + H(+) = deamido-NAD(+) + diphosphate. It functions in the pathway cofactor biosynthesis; NAD(+) biosynthesis; deamido-NAD(+) from nicotinate D-ribonucleotide: step 1/1. Functionally, catalyzes the reversible adenylation of nicotinate mononucleotide (NaMN) to nicotinic acid adenine dinucleotide (NaAD). In Maridesulfovibrio salexigens (strain ATCC 14822 / DSM 2638 / NCIMB 8403 / VKM B-1763) (Desulfovibrio salexigens), this protein is Probable nicotinate-nucleotide adenylyltransferase.